A 607-amino-acid polypeptide reads, in one-letter code: Albumin (607 aa).

An N-terminal signal peptide occupies residues 1–18; that stretch reads MKWVTFISLLLLFSSAYS. Residues 19-24 constitute a propeptide that is removed on maturation; that stretch reads RGVFRR. Albumin domains follow at residues 19–209, 210–402, and 403–600; these read RGVF…DAMR, EKVL…KLKH, and LVDE…KLVA. His-27 provides a ligand contact to Cu cation. Position 29 is a phosphoserine (Ser-29). Ca(2+)-binding residues include Glu-30 and Asp-37. A disulfide bridge links Cys-77 with Cys-86. 2 positions are modified to phosphoserine: Ser-82 and Ser-89. Residue His-91 coordinates Zn(2+). 6 disulfides stabilise this stretch: Cys-99–Cys-115, Cys-114–Cys-125, Cys-147–Cys-192, Cys-191–Cys-200, Cys-223–Cys-269, and Cys-268–Cys-276. Thr-107 bears the Phosphothreonine mark. Residue Lys-228 is modified to N6-succinyllysine. A Ca(2+)-binding site is contributed by Glu-267. 2 residues coordinate Zn(2+): His-270 and Asp-272. Asp-272, Glu-275, Asp-278, and Asp-282 together coordinate Ca(2+). 8 cysteine pairs are disulfide-bonded: Cys-288-Cys-302, Cys-301-Cys-312, Cys-339-Cys-384, Cys-383-Cys-392, Cys-415-Cys-461, Cys-460-Cys-471, Cys-484-Cys-500, and Cys-499-Cys-510. Residue Ser-296 is modified to Phosphoserine. Ser-442 is subject to Phosphoserine. Thr-443 and Thr-445 each carry phosphothreonine. Lys-459 is subject to N6-succinyllysine. Ser-512 is subject to Phosphoserine. Disulfide bonds link Cys-537-Cys-582 and Cys-581-Cys-590. Lys-557 carries the post-translational modification N6-methyllysine. Thr-569 is subject to Phosphothreonine. N6-succinyllysine is present on Lys-587.

The protein belongs to the ALB/AFP/VDB family. In terms of assembly, interacts with FCGRT; this interaction regulates ALB homeostasis. Interacts with TASOR. In plasma, occurs in a covalently-linked complex with chromophore-bound alpha-1-microglobulin; this interaction does not prevent fatty acid binding to ALB. Phosphorylated by FAM20C in the extracellular medium. In terms of tissue distribution, plasma.

The protein localises to the secreted. Functionally, binds water, Ca(2+), Na(+), K(+), fatty acids, hormones, bilirubin and drugs. Its main function is the regulation of the colloidal osmotic pressure of blood. Major zinc transporter in plasma, typically binds about 80% of all plasma zinc. Major calcium and magnesium transporter in plasma, binds approximately 45% of circulating calcium and magnesium in plasma. Potentially has more than two calcium-binding sites and might additionally bind calcium in a non-specific manner. The shared binding site between zinc and calcium at residue Asp-272 suggests a crosstalk between zinc and calcium transport in the blood. The rank order of affinity is zinc &gt; calcium &gt; magnesium. Binds to the bacterial siderophore enterobactin and inhibits enterobactin-mediated iron uptake of E.coli from ferric transferrin, and may thereby limit the utilization of iron and growth of enteric bacteria such as E.coli. Does not prevent iron uptake by the bacterial siderophore aerobactin. The polypeptide is Albumin (ALB) (Ovis aries (Sheep)).